The primary structure comprises 454 residues: MAEFSQKRGKRRGDEGLGSMVDFLLANARLVLGVGGAAVLGIATLAVKRFIDRATSPRDEDDTKADSWKELSLLKATPHLQPRPPPAALSQPVLPLAPSSSAPEGPAKSDPEVTPQLSSPAPLCLTLQERLLAFERDRVTIPAAQVALAKQLAGDIALELQAYFQSKFPELPFGAFVPGGPLYDGLQAGAADHVRLLVPLVLEPGLWSLVPGVDTVARDPRCWAVRRTQLEFCPRGSSPWDRFLVGGYLSSRVLLELLRKVLAASVNWPAIGSLLGCLIRPSMASEELLLEVQHERLELTVAVLVAVPGVDADDRLLLAWPLEGLAGNLWLQDLYPVEAARLRALDDRDAGTRRRLLLLLCAVCRGCSALGQLGRGHLTQVVLRLGEDNVDWTEEALGERFLQALELLIGSLEQASLPCHFNPSVNLFSNLREEEIDDIGYALYSGLQEPEGLL.

The Mitochondrial intermembrane segment spans residues 1–22 (MAEFSQKRGKRRGDEGLGSMVD). A helical transmembrane segment spans residues 23–43 (FLLANARLVLGVGGAAVLGIA). The Cytoplasmic segment spans residues 44-454 (TLAVKRFIDR…SGLQEPEGLL (411 aa)). The interval 76–119 (ATPHLQPRPPPAALSQPVLPLAPSSSAPEGPAKSDPEVTPQLSS) is disordered. Low complexity predominate over residues 88-108 (ALSQPVLPLAPSSSAPEGPAK).

It belongs to the MID49/MID51 family. As to quaternary structure, interacts with DNM1L.

Its subcellular location is the mitochondrion outer membrane. Mitochondrial outer membrane protein which regulates mitochondrial organization. It is required for mitochondrial fission and promotes the recruitment and association of the fission mediator dynamin-related protein 1 (DNM1L) to the mitochondrial surface independently of the mitochondrial fission FIS1 and MFF proteins. Regulates DNM1L GTPase activity. This Pongo abelii (Sumatran orangutan) protein is Mitochondrial dynamics protein MID49 (MIEF2).